The primary structure comprises 281 residues: Bifunctional protein FolD (281 aa).

NADP(+) is bound by residues 165–167 (GRS) and Ser190.

The protein belongs to the tetrahydrofolate dehydrogenase/cyclohydrolase family. As to quaternary structure, homodimer.

The enzyme catalyses (6R)-5,10-methylene-5,6,7,8-tetrahydrofolate + NADP(+) = (6R)-5,10-methenyltetrahydrofolate + NADPH. It carries out the reaction (6R)-5,10-methenyltetrahydrofolate + H2O = (6R)-10-formyltetrahydrofolate + H(+). It participates in one-carbon metabolism; tetrahydrofolate interconversion. Its function is as follows. Catalyzes the oxidation of 5,10-methylenetetrahydrofolate to 5,10-methenyltetrahydrofolate and then the hydrolysis of 5,10-methenyltetrahydrofolate to 10-formyltetrahydrofolate. The chain is Bifunctional protein FolD from Polaromonas sp. (strain JS666 / ATCC BAA-500).